The primary structure comprises 321 residues: Transaldolase (321 aa).

Lys132 (schiff-base intermediate with substrate) is an active-site residue.

This sequence belongs to the transaldolase family. Type 1 subfamily. Homodimer.

It localises to the cytoplasm. The enzyme catalyses D-sedoheptulose 7-phosphate + D-glyceraldehyde 3-phosphate = D-erythrose 4-phosphate + beta-D-fructose 6-phosphate. It participates in carbohydrate degradation; pentose phosphate pathway; D-glyceraldehyde 3-phosphate and beta-D-fructose 6-phosphate from D-ribose 5-phosphate and D-xylulose 5-phosphate (non-oxidative stage): step 2/3. Transaldolase is important for the balance of metabolites in the pentose-phosphate pathway. In Agrobacterium fabrum (strain C58 / ATCC 33970) (Agrobacterium tumefaciens (strain C58)), this protein is Transaldolase.